Here is a 204-residue protein sequence, read N- to C-terminus: CASP-like protein 2A1 (204 aa).

The span at 1–11 (MEKSNDHDKAS) shows a compositional bias: basic and acidic residues. Positions 1-25 (MEKSNDHDKASHGGSGGGATEKWEE) are disordered. Residues 1-32 (MEKSNDHDKASHGGSGGGATEKWEETSPGIRT) are Cytoplasmic-facing. The helical transmembrane segment at 33 to 53 (AETMLRLAPVGLCVAALVVML) threads the bilayer. Residues 54–74 (KDSETNEFGSISYSNLTAFRY) are Extracellular-facing. Asparagine 68 is a glycosylation site (N-linked (GlcNAc...) asparagine). The helical transmembrane segment at 75-95 (LVHANGICAGYSLLSAAIAAM) threads the bilayer. Residues 96 to 113 (PRSSSTMPRVWTFFCLDQ) are Cytoplasmic-facing. The chain crosses the membrane as a helical span at residues 114-134 (LLTYLVLAAGAVSAEVLYLAY). The Extracellular portion of the chain corresponds to 135–155 (NGDSAITWSDACSSYGGFCHR). A helical transmembrane segment spans residues 156–176 (ATASVIITFFVVCFYILLSLI). The Cytoplasmic portion of the chain corresponds to 177–204 (SSYKLFTRFDPPSIVDSDKTLEVAVFGS).

The protein belongs to the Casparian strip membrane proteins (CASP) family. In terms of assembly, homodimer and heterodimers.

It localises to the cell membrane. The polypeptide is CASP-like protein 2A1 (Arabidopsis lyrata subsp. lyrata (Lyre-leaved rock-cress)).